We begin with the raw amino-acid sequence, 347 residues long: Endophilin-A3 (347 aa).

The tract at residues 1–21 (MSVAGLKKQFHKASQLFSEKI) is membrane-binding amphipathic helix. The 232-residue stretch at 18–249 (SEKISGAEGT…LELRIALASQ (232 aa)) folds into the BAR domain. A required for dimerization upon membrane association region spans residues 60–87 (PNPAYRAKLGMLNTMSKLRGQVKATGYP). Positions 180-201 (EEEIRQAVEKFEESKELAERSM) form a coiled coil. Residues 218 to 254 (FVEAALDYHRQSTEILQELQNKLELRIALASQVPRRD) form an interaction with ARC region. Residues 255–284 (YMPKPVNTSSTNANGVEPSSSSKLTGTDIP) form a disordered region. Positions 260–284 (VNTSSTNANGVEPSSSSKLTGTDIP) are enriched in polar residues. The region spanning 285–344 (SDQPCCRGLYDFEPENEGELGFKEGDIITLTNQIDENWYEGMLRGESGFFPINYVEVIVP) is the SH3 domain.

It belongs to the endophilin family. Interacts with SGIP1 and DYDC1. Interacts with FASLG. Interacts with ATXN2. Interacts with BIN2. Interacts with ARC, DNM1 and SYNJ1. In terms of tissue distribution, expressed at high level in testis and at lower level in brain and liver.

Its subcellular location is the cytoplasm. It is found in the early endosome membrane. In terms of biological role, implicated in endocytosis. May recruit other proteins to membranes with high curvature. The protein is Endophilin-A3 (Sh3gl3) of Rattus norvegicus (Rat).